Consider the following 197-residue polypeptide: Glycerol-3-phosphate acyltransferase (197 aa).

5 consecutive transmembrane segments (helical) span residues 7–27 (PSIAALIGYAFGSIPFGLLLT), 56–76 (LAALTLVLDLVKGFVPVWIAW), 82–102 (DIGWAALGAVVGHCFPIWLGF), 116–136 (FGLGWGIGLAYAFVWLVMLAI), and 157–177 (YFGRPTFVPPLVIIAVIIIWL).

The protein belongs to the PlsY family. In terms of assembly, probably interacts with PlsX.

It localises to the cell inner membrane. The enzyme catalyses an acyl phosphate + sn-glycerol 3-phosphate = a 1-acyl-sn-glycero-3-phosphate + phosphate. It participates in lipid metabolism; phospholipid metabolism. Catalyzes the transfer of an acyl group from acyl-phosphate (acyl-PO(4)) to glycerol-3-phosphate (G3P) to form lysophosphatidic acid (LPA). This enzyme utilizes acyl-phosphate as fatty acyl donor, but not acyl-CoA or acyl-ACP. The chain is Glycerol-3-phosphate acyltransferase from Erythrobacter litoralis (strain HTCC2594).